Here is a 165-residue protein sequence, read N- to C-terminus: Chemotaxis protein CheW (165 aa).

Belongs to the CheW family.

Plays an essential role in chemotaxis signal transduction system in order to colonize the host stomach. The polypeptide is Chemotaxis protein CheW (Helicobacter pylori (strain ATCC 700392 / 26695) (Campylobacter pylori)).